The following is a 627-amino-acid chain: 5-aminolevulinate synthase, non-specific, mitochondrial (627 aa).

The N-terminal 58 residues, 1 to 58 (MDVIVRRCPFLARVPQAFFQQSKKSLAVYAQRCPFMMELASKPMAPSLARALCSSSSS), are a transit peptide targeting the mitochondrion. The substrate site is built by R204, S321, and K340. Positions 373, 401, and 429 each coordinate pyridoxal 5'-phosphate. Residue K432 is part of the active site. An N6-(pyridoxal phosphate)lysine modification is found at K432. Residues T461 and T462 each contribute to the pyridoxal 5'-phosphate site. T549 is a binding site for substrate.

Belongs to the class-II pyridoxal-phosphate-dependent aminotransferase family. In terms of assembly, homodimer. It depends on pyridoxal 5'-phosphate as a cofactor.

The protein resides in the mitochondrion inner membrane. The enzyme catalyses succinyl-CoA + glycine + H(+) = 5-aminolevulinate + CO2 + CoA. The protein operates within porphyrin-containing compound metabolism; protoporphyrin-IX biosynthesis; 5-aminolevulinate from glycine: step 1/1. In terms of biological role, catalyzes the pyridoxal 5'-phosphate (PLP)-dependent condensation of succinyl-CoA and glycine to form aminolevulinic acid (ALA), with CoA and CO2 as by-products. The sequence is that of 5-aminolevulinate synthase, non-specific, mitochondrial (alas1) from Opsanus tau (Oyster toadfish).